The primary structure comprises 304 residues: Proteasome subunit beta (304 aa).

Positions methionine 1–glycine 65 are cleaved as a propeptide — removed in mature form; by autocatalysis. The Nucleophile role is filled by threonine 66.

The protein belongs to the peptidase T1B family. The 20S proteasome core is composed of 14 alpha and 14 beta subunits that assemble into four stacked heptameric rings, resulting in a barrel-shaped structure. The two inner rings, each composed of seven catalytic beta subunits, are sandwiched by two outer rings, each composed of seven alpha subunits. The catalytic chamber with the active sites is on the inside of the barrel. Has a gated structure, the ends of the cylinder being occluded by the N-termini of the alpha-subunits. Is capped by the proteasome-associated ATPase, ARC.

It localises to the cytoplasm. It carries out the reaction Cleavage of peptide bonds with very broad specificity.. It functions in the pathway protein degradation; proteasomal Pup-dependent pathway. The formation of the proteasomal ATPase ARC-20S proteasome complex, likely via the docking of the C-termini of ARC into the intersubunit pockets in the alpha-rings, may trigger opening of the gate for substrate entry. Interconversion between the open-gate and close-gate conformations leads to a dynamic regulation of the 20S proteasome proteolysis activity. In terms of biological role, component of the proteasome core, a large protease complex with broad specificity involved in protein degradation. The chain is Proteasome subunit beta from Mycobacterium sp. (strain JLS).